Reading from the N-terminus, the 222-residue chain is UPF0758 protein YicR (222 aa).

Residues 100–222 form the MPN domain; that stretch reads PLLSPEMTRE…YVSFAERGWI (123 aa). Residues His-171, His-173, and Asp-184 each coordinate Zn(2+). Positions 171-184 match the JAMM motif motif; sequence HNHPSGCAEPSKAD.

The protein belongs to the UPF0758 family. YicR subfamily.

The protein is UPF0758 protein YicR of Escherichia coli O9:H4 (strain HS).